The primary structure comprises 165 residues: Transcriptional repressor NrdR (165 aa).

The segment at 3-34 (CPFCSANDTKVIDSRLVSDGHQVRRRRECLAC) is a zinc-finger region. Positions 49–139 (PRIIKRDGSR…VYLSFEDISE (91 aa)) constitute an ATP-cone domain.

Belongs to the NrdR family. Zn(2+) serves as cofactor.

In terms of biological role, negatively regulates transcription of bacterial ribonucleotide reductase nrd genes and operons by binding to NrdR-boxes. This Colwellia psychrerythraea (strain 34H / ATCC BAA-681) (Vibrio psychroerythus) protein is Transcriptional repressor NrdR.